A 75-amino-acid chain; its full sequence is Sec-independent protein translocase protein TatA (75 aa).

Residues 1–21 (MGMPSMPELLIVLAIVVLLFG) form a helical membrane-spanning segment. Residues 47–75 (DEEEEVKEITKKEEPKVEAAAEEKKSENA) are disordered. Over residues 53–75 (KEITKKEEPKVEAAAEEKKSENA) the composition is skewed to basic and acidic residues.

It belongs to the TatA/E family. In terms of assembly, the Tat system comprises two distinct complexes: a TatABC complex, containing multiple copies of TatA, TatB and TatC subunits, and a separate TatA complex, containing only TatA subunits. Substrates initially bind to the TatABC complex, which probably triggers association of the separate TatA complex to form the active translocon.

The protein resides in the cell inner membrane. In terms of biological role, part of the twin-arginine translocation (Tat) system that transports large folded proteins containing a characteristic twin-arginine motif in their signal peptide across membranes. TatA could form the protein-conducting channel of the Tat system. The protein is Sec-independent protein translocase protein TatA of Sulfurovum sp. (strain NBC37-1).